A 133-amino-acid polypeptide reads, in one-letter code: Profilin-2 (133 aa).

It belongs to the profilin family. As to quaternary structure, occurs in many kinds of cells as a complex with monomeric actin in a 1:1 ratio.

The protein localises to the cytoplasm. The protein resides in the cytoskeleton. Functionally, binds to actin and affects the structure of the cytoskeleton. At high concentrations, profilin prevents the polymerization of actin, whereas it enhances it at low concentrations. By binding to PIP2, it inhibits the formation of IP3 and DG. This Artemisia vulgaris (Mugwort) protein is Profilin-2.